We begin with the raw amino-acid sequence, 453 residues long: Growth/differentiation factor 9 (453 aa).

The N-terminal stretch at 1-27 (MALPNKFFLWFCCFAWLCFPISLDSLP) is a signal peptide. Positions 28–318 (SRGEAQIVAR…EGVRSSRHRR (291 aa)) are excised as a propeptide. N-linked (GlcNAc...) asparagine glycans are attached at residues Asn-163, Asn-236, Asn-255, and Asn-269. Residues 282–328 (LHPKRKPSQGPDQRRELSAYPVGEEAAEGVRSSRHRRDQESVSSELK) are disordered. A compositionally biased stretch (basic and acidic residues) spans 318–328 (RDQESVSSELK). N-linked (GlcNAc...) asparagine glycosylation is present at Asn-337. Disulfide bonds link Cys-352–Cys-418, Cys-381–Cys-450, and Cys-385–Cys-452.

It belongs to the TGF-beta family. Homodimer or heterodimer (Potential). But, in contrast to other members of this family, cannot be disulfide-linked. Post-translationally, phosphorylated; phosphorylation is critical for GDF9 function.

It is found in the secreted. Its function is as follows. Required for ovarian folliculogenesis. In Capra hircus (Goat), this protein is Growth/differentiation factor 9 (GDF9).